The following is a 210-amino-acid chain: Large ribosomal subunit protein uL3 (210 aa).

This sequence belongs to the universal ribosomal protein uL3 family. In terms of assembly, part of the 50S ribosomal subunit. Forms a cluster with proteins L14 and L19.

Functionally, one of the primary rRNA binding proteins, it binds directly near the 3'-end of the 23S rRNA, where it nucleates assembly of the 50S subunit. The sequence is that of Large ribosomal subunit protein uL3 from Geobacter metallireducens (strain ATCC 53774 / DSM 7210 / GS-15).